The chain runs to 225 residues: NAD(P)H-quinone oxidoreductase subunit K, chloroplastic (225 aa).

The [4Fe-4S] cluster site is built by C43, C44, C108, and C139.

The protein belongs to the complex I 20 kDa subunit family. In terms of assembly, NDH is composed of at least 16 different subunits, 5 of which are encoded in the nucleus. It depends on [4Fe-4S] cluster as a cofactor.

Its subcellular location is the plastid. It is found in the chloroplast thylakoid membrane. The catalysed reaction is a plastoquinone + NADH + (n+1) H(+)(in) = a plastoquinol + NAD(+) + n H(+)(out). It carries out the reaction a plastoquinone + NADPH + (n+1) H(+)(in) = a plastoquinol + NADP(+) + n H(+)(out). Functionally, NDH shuttles electrons from NAD(P)H:plastoquinone, via FMN and iron-sulfur (Fe-S) centers, to quinones in the photosynthetic chain and possibly in a chloroplast respiratory chain. The immediate electron acceptor for the enzyme in this species is believed to be plastoquinone. Couples the redox reaction to proton translocation, and thus conserves the redox energy in a proton gradient. The protein is NAD(P)H-quinone oxidoreductase subunit K, chloroplastic of Nicotiana tabacum (Common tobacco).